Consider the following 443-residue polypeptide: Probable ribonuclease FAU-1 (443 aa).

Belongs to the FAU-1 family.

In terms of biological role, probable RNase involved in rRNA stability through maturation and/or degradation of precursor rRNAs. Binds to RNA in loop regions with AU-rich sequences. In Pyrobaculum aerophilum (strain ATCC 51768 / DSM 7523 / JCM 9630 / CIP 104966 / NBRC 100827 / IM2), this protein is Probable ribonuclease FAU-1.